The sequence spans 337 residues: MTTLKPALRRAAVLLPIAAVASSLFPIQEASAQRALVTADGSSTVFPISEAVAEEFQKRNKNINVTVGVSGTGGGFKRFCNGEIDIANASRPIKKEEVEACRKKGIRYIELPVAFDALTVVVNKSNPVNSITTAELAKIFGRDAEKKTTNWRQVKSSFPNLPLRVYAPGTDSGTYDYFNEAILNKKGTRGDLTASEDDNILVQGVSRDRGGIGFFGFSYYEENKGKLKALAVVNSNGKAVMPSVQNVLNGTYDPLARPVFIYVSEQAAKKANVRSFVNFYLQNAGKLSREVGFVPLPAKAYTAATQRFRSNKTGTVFAGKSLVGGSIEDLLKAEGIN.

Positions 1-30 are cleaved as a signal peptide; the sequence is MTTLKPALRRAAVLLPIAAVASSLFPIQEA.

It belongs to the PstS family. Post-translationally, the N-terminus is blocked.

Its subcellular location is the cell inner membrane. May be involved in the system for phosphate transport across the cytoplasmic membrane. This Synechococcus elongatus (strain ATCC 33912 / PCC 7942 / FACHB-805) (Anacystis nidulans R2) protein is Protein SphX (sphX).